We begin with the raw amino-acid sequence, 364 residues long: Coproporphyrin III ferrochelatase (364 aa).

2 residues coordinate Fe-coproporphyrin III: Arg-29 and Tyr-118. Positions 169 and 250 each coordinate Fe(2+).

Belongs to the ferrochelatase family.

It is found in the cytoplasm. It catalyses the reaction Fe-coproporphyrin III + 2 H(+) = coproporphyrin III + Fe(2+). It functions in the pathway porphyrin-containing compound metabolism; protoheme biosynthesis. Functionally, involved in coproporphyrin-dependent heme b biosynthesis. Catalyzes the insertion of ferrous iron into coproporphyrin III to form Fe-coproporphyrin III. This Streptococcus pneumoniae (strain Taiwan19F-14) protein is Coproporphyrin III ferrochelatase.